Consider the following 41-residue polypeptide: Large ribosomal subunit protein bL36 (41 aa).

This sequence belongs to the bacterial ribosomal protein bL36 family.

This chain is Large ribosomal subunit protein bL36, found in Neisseria gonorrhoeae (strain ATCC 700825 / FA 1090).